A 738-amino-acid polypeptide reads, in one-letter code: Cleavage and polyadenylation specificity factor subunit 2 (738 aa).

It belongs to the metallo-beta-lactamase superfamily. RNA-metabolizing metallo-beta-lactamase-like family. CPSF2/YSH1 subfamily. In terms of assembly, CPSF is a heterotetramer composed of four distinct subunits 160, 100, 70 and 30 kDa.

The protein localises to the nucleus. In terms of biological role, CPSF plays a key role in pre-mRNA 3'-end formation, recognizing the AAUAAA signal sequence and interacting with poly(A)polymerase and other factors to bring about cleavage and poly(A) addition. This Oryza sativa subsp. japonica (Rice) protein is Cleavage and polyadenylation specificity factor subunit 2.